We begin with the raw amino-acid sequence, 410 residues long: Polyadenylation and cleavage factor homolog 5 (410 aa).

Residues 1–17 (MASNGSFSAQRNANAGT) show a composition bias toward polar residues. The segment at 1–32 (MASNGSFSAQRNANAGTTMKRRNDNRGYGGGI) is disordered. A coiled-coil region spans residues 191–214 (SKELTDLLSLLNNEKEKKTSEASN). A C2H2-type zinc finger spans residues 247-269 (RQCTSCGVRFKCQEEHSKHMDWH).

In terms of assembly, forms a complex with cleavage and polyadenylation specificity factor (CPSF) subunits CSTF77, CLPS3, PCFS4 and PCFS1.

It is found in the nucleus. This is Polyadenylation and cleavage factor homolog 5 from Arabidopsis thaliana (Mouse-ear cress).